Reading from the N-terminus, the 114-residue chain is Ig heavy chain V region (114 aa).

The 106-residue stretch at 1–106 (EVQLQQSGAE…AVRVISRYFD (106 aa)) folds into the Ig-like domain.

In Mus musculus (Mouse), this protein is Ig heavy chain V region.